Consider the following 148-residue polypeptide: 3-hydroxyacyl-[acyl-carrier-protein] dehydratase FabZ (148 aa).

The active site involves His-48.

This sequence belongs to the thioester dehydratase family. FabZ subfamily.

It localises to the cytoplasm. The enzyme catalyses a (3R)-hydroxyacyl-[ACP] = a (2E)-enoyl-[ACP] + H2O. Functionally, involved in unsaturated fatty acids biosynthesis. Catalyzes the dehydration of short chain beta-hydroxyacyl-ACPs and long chain saturated and unsaturated beta-hydroxyacyl-ACPs. This is 3-hydroxyacyl-[acyl-carrier-protein] dehydratase FabZ from Campylobacter fetus subsp. fetus (strain 82-40).